Here is a 541-residue protein sequence, read N- to C-terminus: Myrosinase 1 (541 aa).

Positions 1 to 19 (MKLLMLAFVFLLALATCKG) are cleaved as a signal peptide. Intrachain disulfides connect Cys-24–Cys-449, Cys-32–Cys-445, and Cys-224–Cys-232. Asn-33 carries N-linked (GlcNAc...) asparagine glycosylation. Gln-57 lines the a beta-D-glucoside pocket. N-linked (GlcNAc...) asparagine glycosylation is present at Asn-108. His-159 contacts a beta-D-glucoside. N-linked (GlcNAc...) asparagine glycosylation is present at Asn-175. 204–205 (NQ) is a binding site for a beta-D-glucoside. Asn-236 carries N-linked (GlcNAc...) asparagine glycosylation. Tyr-348 provides a ligand contact to a beta-D-glucoside. N-linked (GlcNAc...) asparagine glycosylation is found at Asn-356 and Asn-379. Residues Glu-420, Trp-468, 475–476 (EF), and Phe-484 contribute to the a beta-D-glucoside site. Glu-420 acts as the Nucleophile in catalysis. Asn-493 and Asn-512 each carry an N-linked (GlcNAc...) asparagine glycan.

Belongs to the glycosyl hydrolase 1 family. Homodimer. Expressed in guard cells, phloem-associated cells and myrosin cells.

It localises to the vacuole. It catalyses the reaction a thioglucoside + H2O = a sugar + a thiol.. The enzyme catalyses Hydrolysis of terminal, non-reducing beta-D-glucosyl residues with release of beta-D-glucose.. Degradation of glucosinolates (glucose residue linked by a thioglucoside bound to an amino acid derivative) to glucose, sulfate and any of the products: thiocyanates, isothiocyanates, nitriles, epithionitriles or oxazolidine-2-thiones. These toxic degradation products can deter insect herbivores. Seems to function in abscisic acid (ABA) and methyl jasmonate (MeJA) signaling in guard cells. Functionally redundant with TGG2. Hydrolyzes sinigrin and, with lower efficiency, p-nitrophenyl beta-D-glucoside. The polypeptide is Myrosinase 1 (Arabidopsis thaliana (Mouse-ear cress)).